Here is a 2504-residue protein sequence, read N- to C-terminus: Fatty acid synthase (2504 aa).

Met1 is modified (N-acetylmethionine). The Ketosynthase family 3 (KS3) domain maps to Met1 to Pro406. The residue at position 59 (Lys59) is an N6-acetyllysine. A Phosphoserine modification is found at Ser63. Lys70 is subject to N6-acetyllysine. The active-site For beta-ketoacyl synthase activity is Cys161. Ser207 is modified (phosphoserine). His293 serves as the catalytic For beta-ketoacyl synthase activity. Lys298 is subject to N6-acetyllysine. His331 (for beta-ketoacyl synthase activity) is an active-site residue. Residues Arg429–Pro817 form an acyl and malonyl transferases region. The residue at position 528 (Lys528) is an N6-acetyllysine. Ser581 serves as the catalytic For malonyltransferase activity. Residues Asp647–Thr648 and Phe671 contribute to the an acyl-CoA site. At Lys673 the chain carries N6-acetyllysine. Phosphoserine is present on Ser725. An acyl-CoA is bound at residue Arg773. Lys790 is modified (N6-acetyllysine). The segment at Val844 to Lys967 is N-terminal hotdog fold. In terms of domain architecture, PKS/mFAS DH spans Val844–Ser1104. Residue His878 is the Proton acceptor; for dehydratase activity of the active site. Positions Ser982–Ser1104 are C-terminal hotdog fold. At Lys993 the chain carries N6-acetyllysine. The Proton donor; for dehydratase activity role is filled by Asp1032. 2 positions are modified to N6-acetyllysine: Lys1071 and Lys1276. S-nitrosocysteine is present on Cys1464. Phosphoserine occurs at positions 1577 and 1587. The interval Asp1628–Ala1856 is enoyl reductase. NADP(+) is bound at residue Val1664–Ala1681. Lys1697 carries the post-translational modification N6-(pyridoxal phosphate)lysine; alternate. Lys1697 carries the N6-acetyllysine; alternate modification. An N6-acetyllysine mark is found at Lys1764 and Lys1840. The segment at Val1857 to Ala2111 is beta-ketoacyl reductase. Ser1879–Ala1894 lines the NADP(+) pocket. The residue at position 1988 (Lys1988) is an N6-acetyllysine. Cys2084 bears the S-nitrosocysteine mark. The region spanning His2112–Thr2192 is the Carrier domain. At Ser2150 the chain carries O-(pantetheine 4'-phosphoryl)serine; alternate. Phosphoserine; alternate is present on Ser2150. The segment at Leu2181–Leu2205 is disordered. The span at Ser2185–Lys2198 shows a compositional bias: low complexity. A phosphoserine mark is found at Ser2190 and Ser2229. Residues Ser2201 to Gly2504 are thioesterase. Ser2301 (for thioesterase activity) is an active-site residue. Position 2384 is an N6-acetyllysine (Lys2384). Residue Lys2442 forms a Glycyl lysine isopeptide (Lys-Gly) (interchain with G-Cter in SUMO2) linkage. The For thioesterase activity role is filled by His2474.

In terms of assembly, homodimer which is arranged in a head to tail fashion. Interacts with CEACAM1; this interaction is insulin and phosphorylation-dependent; reduces fatty-acid synthase activity. S-nitrosylation of Fatty acid synthase at cysteine residues Cys-1464 or Cys-2084 is important for the enzyme dimerization. In adipocytes, S-nitrosylation of Fatty acid synthase occurs under physiological conditions and gradually increases during adipogenesis.

It is found in the cytoplasm. The protein resides in the melanosome. The enzyme catalyses acetyl-CoA + n malonyl-CoA + 2n NADPH + 2n H(+) = a long-chain fatty acid + (n+1) CoA + n CO2 + 2n NADP(+).. It carries out the reaction holo-[ACP] + acetyl-CoA = acetyl-[ACP] + CoA. It catalyses the reaction holo-[ACP] + malonyl-CoA = malonyl-[ACP] + CoA. The catalysed reaction is a fatty acyl-[ACP] + malonyl-[ACP] + H(+) = a 3-oxoacyl-[ACP] + holo-[ACP] + CO2. The enzyme catalyses a (3R)-hydroxyacyl-[ACP] + NADP(+) = a 3-oxoacyl-[ACP] + NADPH + H(+). It carries out the reaction a (3R)-hydroxyacyl-[ACP] = a (2E)-enoyl-[ACP] + H2O. It catalyses the reaction a 2,3-saturated acyl-[ACP] + NADP(+) = a (2E)-enoyl-[ACP] + NADPH + H(+). The catalysed reaction is hexadecanoyl-[ACP] + H2O = hexadecanoate + holo-[ACP] + H(+). The enzyme catalyses acetyl-[ACP] + malonyl-[ACP] + H(+) = 3-oxobutanoyl-[ACP] + holo-[ACP] + CO2. It carries out the reaction 3-oxobutanoyl-[ACP] + NADPH + H(+) = (3R)-hydroxybutanoyl-[ACP] + NADP(+). It catalyses the reaction (3R)-hydroxybutanoyl-[ACP] = (2E)-butenoyl-[ACP] + H2O. The catalysed reaction is (2E)-butenoyl-[ACP] + NADPH + H(+) = butanoyl-[ACP] + NADP(+). The enzyme catalyses butanoyl-[ACP] + malonyl-[ACP] + H(+) = 3-oxohexanoyl-[ACP] + holo-[ACP] + CO2. It carries out the reaction 3-oxohexanoyl-[ACP] + NADPH + H(+) = (3R)-hydroxyhexanoyl-[ACP] + NADP(+). It catalyses the reaction (3R)-hydroxyhexanoyl-[ACP] = (2E)-hexenoyl-[ACP] + H2O. The catalysed reaction is (2E)-hexenoyl-[ACP] + NADPH + H(+) = hexanoyl-[ACP] + NADP(+). The enzyme catalyses hexanoyl-[ACP] + malonyl-[ACP] + H(+) = 3-oxooctanoyl-[ACP] + holo-[ACP] + CO2. It carries out the reaction 3-oxooctanoyl-[ACP] + NADPH + H(+) = (3R)-hydroxyoctanoyl-[ACP] + NADP(+). It catalyses the reaction (3R)-hydroxyoctanoyl-[ACP] = (2E)-octenoyl-[ACP] + H2O. The catalysed reaction is (2E)-octenoyl-[ACP] + NADPH + H(+) = octanoyl-[ACP] + NADP(+). The enzyme catalyses octanoyl-[ACP] + malonyl-[ACP] + H(+) = 3-oxodecanoyl-[ACP] + holo-[ACP] + CO2. It carries out the reaction 3-oxodecanoyl-[ACP] + NADPH + H(+) = (3R)-hydroxydecanoyl-[ACP] + NADP(+). It catalyses the reaction (3R)-hydroxydecanoyl-[ACP] = (2E)-decenoyl-[ACP] + H2O. The catalysed reaction is (2E)-decenoyl-[ACP] + NADPH + H(+) = decanoyl-[ACP] + NADP(+). The enzyme catalyses decanoyl-[ACP] + malonyl-[ACP] + H(+) = 3-oxododecanoyl-[ACP] + holo-[ACP] + CO2. It carries out the reaction 3-oxododecanoyl-[ACP] + NADPH + H(+) = (3R)-hydroxydodecanoyl-[ACP] + NADP(+). It catalyses the reaction (3R)-hydroxydodecanoyl-[ACP] = (2E)-dodecenoyl-[ACP] + H2O. The catalysed reaction is (2E)-dodecenoyl-[ACP] + NADPH + H(+) = dodecanoyl-[ACP] + NADP(+). The enzyme catalyses dodecanoyl-[ACP] + malonyl-[ACP] + H(+) = 3-oxotetradecanoyl-[ACP] + holo-[ACP] + CO2. It carries out the reaction 3-oxotetradecanoyl-[ACP] + NADPH + H(+) = (3R)-hydroxytetradecanoyl-[ACP] + NADP(+). It catalyses the reaction (3R)-hydroxytetradecanoyl-[ACP] = (2E)-tetradecenoyl-[ACP] + H2O. The catalysed reaction is (2E)-tetradecenoyl-[ACP] + NADPH + H(+) = tetradecanoyl-[ACP] + NADP(+). The enzyme catalyses tetradecanoyl-[ACP] + malonyl-[ACP] + H(+) = 3-oxohexadecanoyl-[ACP] + holo-[ACP] + CO2. It carries out the reaction 3-oxohexadecanoyl-[ACP] + NADPH + H(+) = (3R)-hydroxyhexadecanoyl-[ACP] + NADP(+). It catalyses the reaction (3R)-hydroxyhexadecanoyl-[ACP] = (2E)-hexadecenoyl-[ACP] + H2O. The catalysed reaction is (2E)-hexadecenoyl-[ACP] + NADPH + H(+) = hexadecanoyl-[ACP] + NADP(+). The enzyme catalyses hexadecanoyl-[ACP] + malonyl-[ACP] + H(+) = 3-oxooctadecanoyl-[ACP] + holo-[ACP] + CO2. It carries out the reaction 3-oxooctadecanoyl-[ACP] + NADPH + H(+) = (3R)-hydroxyoctadecanoyl-[ACP] + NADP(+). It catalyses the reaction (3R)-hydroxyoctadecanoyl-[ACP] = (2E)-octadecenoyl-[ACP] + H2O. The catalysed reaction is (2E)-octadecenoyl-[ACP] + NADPH + H(+) = octadecanoyl-[ACP] + NADP(+). The enzyme catalyses tetradecanoyl-[ACP] + H2O = tetradecanoate + holo-[ACP] + H(+). Its pathway is lipid metabolism; fatty acid biosynthesis. Its function is as follows. Fatty acid synthetase is a multifunctional enzyme that catalyzes the de novo biosynthesis of long-chain saturated fatty acids starting from acetyl-CoA and malonyl-CoA in the presence of NADPH. This multifunctional protein contains 7 catalytic activities and a site for the binding of the prosthetic group 4'-phosphopantetheine of the acyl carrier protein ([ACP]) domain. This Mus musculus (Mouse) protein is Fatty acid synthase (Fasn).